Consider the following 167-residue polypeptide: Small ribosomal subunit protein uS3m (167 aa).

A mitochondrion-targeting transit peptide spans 1-35; it reads MAASVCSGLLGPRVLSWSRELPCAWRALHTSPVCA.

It belongs to the universal ribosomal protein uS3 family. As to quaternary structure, component of the mitochondrial small ribosomal subunit (mt-SSU). Mature mammalian 55S mitochondrial ribosomes consist of a small (28S) and a large (39S) subunit. The 28S small subunit contains a 12S ribosomal RNA (12S mt-rRNA) and 30 different proteins. The 39S large subunit contains a 16S rRNA (16S mt-rRNA), a copy of mitochondrial valine transfer RNA (mt-tRNA(Val)), which plays an integral structural role, and 52 different proteins.

It localises to the mitochondrion. The polypeptide is Small ribosomal subunit protein uS3m (MRPS24) (Homo sapiens (Human)).